The primary structure comprises 729 residues: ATP-dependent DNA helicase Hel308 (729 aa).

ATP contacts are provided by residues Q28 and 46 to 53 (IPTASGKT). In terms of domain architecture, Helicase ATP-binding spans 33 to 199 (EKGLLEGRNL…WLEAELVVSE (167 aa)). The DEAH box signature appears at 144-147 (DEVH). The Helicase C-terminal domain maps to 232–426 (AVNLALDTLK…SKLGTENALR (195 aa)). The interval 706–729 (SSGIIASEPPEKSPYSGQKTISDY) is disordered. Over residues 720–729 (YSGQKTISDY) the composition is skewed to polar residues.

This sequence belongs to the helicase family. Hel308 subfamily. In terms of assembly, monomer.

It carries out the reaction Couples ATP hydrolysis with the unwinding of duplex DNA by translocating in the 3'-5' direction.. It catalyses the reaction ATP + H2O = ADP + phosphate + H(+). In terms of biological role, DNA-dependent ATPase and 3'-5' DNA helicase that may be involved in repair of stalled replication forks. This Methanosarcina barkeri (strain Fusaro / DSM 804) protein is ATP-dependent DNA helicase Hel308.